The sequence spans 122 residues: Large ribosomal subunit protein uL14 (122 aa).

This sequence belongs to the universal ribosomal protein uL14 family. In terms of assembly, part of the 50S ribosomal subunit. Forms a cluster with proteins L3 and L19. In the 70S ribosome, L14 and L19 interact and together make contacts with the 16S rRNA in bridges B5 and B8.

Its function is as follows. Binds to 23S rRNA. Forms part of two intersubunit bridges in the 70S ribosome. The protein is Large ribosomal subunit protein uL14 of Parafrankia sp. (strain EAN1pec).